Reading from the N-terminus, the 618-residue chain is DNA mismatch repair protein MutL (618 aa).

Positions 371 to 401 are disordered; it reads AREPATPRYSGGASGGSGGRQSVGGWSHAQP. Residues 382–392 show a composition bias toward gly residues; that stretch reads GASGGSGGRQS.

Belongs to the DNA mismatch repair MutL/HexB family.

Its function is as follows. This protein is involved in the repair of mismatches in DNA. It is required for dam-dependent methyl-directed DNA mismatch repair. May act as a 'molecular matchmaker', a protein that promotes the formation of a stable complex between two or more DNA-binding proteins in an ATP-dependent manner without itself being part of a final effector complex. The sequence is that of DNA mismatch repair protein MutL from Salmonella arizonae (strain ATCC BAA-731 / CDC346-86 / RSK2980).